A 356-amino-acid chain; its full sequence is TPR repeat-containing protein P27G11.02 (356 aa).

A mitochondrion-targeting transit peptide spans 1 to 20 (MRMQWIWKSRRSLQNVFIRR). TPR repeat units lie at residues 194–227 (SRLFEQSATLYFQAGTPSYAVPLYHEALNLTMAN) and 290–323 (AAAFYTLGQIAERQGNIDLALKHYKNSEALRKDD).

It is found in the mitochondrion. The polypeptide is TPR repeat-containing protein P27G11.02 (Schizosaccharomyces pombe (strain 972 / ATCC 24843) (Fission yeast)).